The primary structure comprises 468 residues: Procollagen C-endopeptidase enhancer 1 (468 aa).

A signal peptide spans 1–24 (MLPAALTSLLGPFLLAWVLPLARG). N-linked (GlcNAc...) asparagine glycosylation occurs at asparagine 28. 4 disulfide bridges follow: cysteine 36–cysteine 62, cysteine 89–cysteine 111, cysteine 158–cysteine 185, and cysteine 212–cysteine 235. CUB domains lie at 36–148 (CGGD…YSGR) and 158–272 (CGGR…YRTL). Phosphothreonine is present on threonine 41. The residue at position 49 (serine 49) is a Phosphoserine. Positions 271 to 341 (TLPRDAVEKE…VAPDAPSITC (71 aa)) are disordered. The span at 272 to 281 (LPRDAVEKES) shows a compositional bias: basic and acidic residues. Cystine bridges form between cysteine 341-cysteine 409 and cysteine 356-cysteine 460. Residues 341–460 (CPKQYKRSGT…ILSNLSKRKC (120 aa)) form the NTR domain. The N-linked (GlcNAc...) asparagine glycan is linked to asparagine 454.

Interacts with EFEMP2. Expressed at highest levels in collagen-rich tissues, especially tendon. Also expressed in cornea and sterna.

It is found in the secreted. Binds to the C-terminal propeptide of type I procollagen and enhances procollagen C-proteinase activity. This chain is Procollagen C-endopeptidase enhancer 1 (Pcolce), found in Rattus norvegicus (Rat).